Here is a 363-residue protein sequence, read N- to C-terminus: Biotin synthase (363 aa).

The Radical SAM core domain maps to 38 to 266 (NTVQVSTLLS…ETQVRLSAGR (229 aa)). 3 residues coordinate [4Fe-4S] cluster: Cys-53, Cys-57, and Cys-60. Residues Cys-97, Cys-129, Cys-189, and Arg-261 each contribute to the [2Fe-2S] cluster site. A disordered region spans residues 315 to 363 (KAFEKKSQPESVAAEKSKYQSQGEKPRWSRPEHKIDRNLEAQQNAKTKA). Over residues 316 to 353 (AFEKKSQPESVAAEKSKYQSQGEKPRWSRPEHKIDRNL) the composition is skewed to basic and acidic residues. The span at 354–363 (EAQQNAKTKA) shows a compositional bias: polar residues.

It belongs to the radical SAM superfamily. Biotin synthase family. As to quaternary structure, homodimer. The cofactor is [4Fe-4S] cluster. Requires [2Fe-2S] cluster as cofactor.

It catalyses the reaction (4R,5S)-dethiobiotin + (sulfur carrier)-SH + 2 reduced [2Fe-2S]-[ferredoxin] + 2 S-adenosyl-L-methionine = (sulfur carrier)-H + biotin + 2 5'-deoxyadenosine + 2 L-methionine + 2 oxidized [2Fe-2S]-[ferredoxin]. It participates in cofactor biosynthesis; biotin biosynthesis; biotin from 7,8-diaminononanoate: step 2/2. In terms of biological role, catalyzes the conversion of dethiobiotin (DTB) to biotin by the insertion of a sulfur atom into dethiobiotin via a radical-based mechanism. The protein is Biotin synthase of Christiangramia forsetii (strain DSM 17595 / CGMCC 1.15422 / KT0803) (Gramella forsetii).